A 450-amino-acid chain; its full sequence is Sorting nexin-4 (450 aa).

M1 is modified (N-acetylmethionine). Residues 1–46 (MEQAPPDPERQLQPAPLEPLGSPDAGLGAAVGKEAEGAGEESSGVD) are disordered. Residue S22 is modified to Phosphoserine. Residues 61-187 (SVSEAEKRTG…YLFLTQEGNW (127 aa)) form the PX domain. A 1,2-diacyl-sn-glycero-3-phospho-(1D-myo-inositol-3-phosphate)-binding residues include R106, S108, K132, and R154.

This sequence belongs to the sorting nexin family. As to quaternary structure, heterodimer; heterodimerizes with SNX7 or SNX30. Interacts with WWC1/KIBRA. Identified in a complex with WWC1/KIBRA and dynein components DYNLL1 and DYNC1I2. Interacts with BIN1.

The protein resides in the early endosome membrane. Involved in the regulation of endocytosis and in several stages of intracellular trafficking. Plays a role in recycling endocytosed transferrin receptor and prevent its degradation. Involved in autophagosome assembly by regulating trafficking and recycling of phospholipid scramblase ATG9A. In Homo sapiens (Human), this protein is Sorting nexin-4.